We begin with the raw amino-acid sequence, 599 residues long: Nucleolar protein dnt1 (599 aa).

Position 174 is a phosphoserine (Ser174). Disordered regions lie at residues 210-262 and 292-599; these read TQEE…PSRL and DKSL…AALV. Residues 218–241 show a composition bias toward polar residues; the sequence is QSFNSSLTPSQPTTYNRANFFSIN. Residues 242–251 are compositionally biased toward low complexity; the sequence is DASSDSSSDA. The span at 292-303 shows a compositional bias: basic and acidic residues; the sequence is DKSLRSSTREVS. A Phosphoserine modification is found at Ser306. Residues 307–320 show a composition bias toward acidic residues; the sequence is PNEDSVNDDSSSDV. Over residues 321-333 the composition is skewed to basic and acidic residues; sequence SDEKETEAKHEIR. Residues 344 to 354 show a composition bias toward polar residues; it reads SHPSTAVPSEN. The segment covering 364-380 has biased composition (low complexity); the sequence is LSESSTTSISSSPSENS. Residues 390-401 show a composition bias toward polar residues; sequence DSPNKSLVNDNV. A compositionally biased stretch (basic and acidic residues) spans 402–413; sequence SAKHDKESENGK. Polar residues predominate over residues 421–431; that stretch reads QTLVTTSTISA. Over residues 436–452 the composition is skewed to acidic residues; sequence PSDEIGSENDSDSDSDS. Polar residues predominate over residues 456–480; that stretch reads VPLSQLQKKSQQRNSVSHEIQNRGT. Residues 483–500 show a composition bias toward basic and acidic residues; it reads SPKEPKAKPSTERPETHR. The span at 501–514 shows a compositional bias: polar residues; it reads TLSYSRLSELSKTF. Thr513 is modified (phosphothreonine). 2 stretches are compositionally biased toward basic and acidic residues: residues 533-542 and 558-574; these read ESKEEGRSDE and NSEK…EKRA.

Post-translationally, phosphorylated by clp1.

The protein localises to the cytoplasm. It localises to the nucleus. The protein resides in the nucleolus. Its subcellular location is the cytoskeleton. It is found in the spindle. Its function is as follows. Negatively regulates the septation initiation network (SIN) pathway, independently of the cdc14 phosphatase clp1. May also have a role in silencing rDNA transcription. Required for maintaining the exclusive nucleolus localization of nuc1. The chain is Nucleolar protein dnt1 (dnt1) from Schizosaccharomyces pombe (strain 972 / ATCC 24843) (Fission yeast).